Consider the following 422-residue polypeptide: Adenylosuccinate synthetase (422 aa).

GTP contacts are provided by residues 11–17 and 39–41; these read GDEGKGK and GHT. D12 acts as the Proton acceptor in catalysis. Positions 12 and 39 each coordinate Mg(2+). IMP is bound by residues 12–15, 37–40, T129, R143, N219, T234, and R298; these read DEGK and NAGH. Residue H40 is the Proton donor of the active site. 294 to 300 contributes to the substrate binding site; that stretch reads VTTGRRR. GTP-binding positions include R300, 326-328, and 409-411; these read KLD and GTG.

It belongs to the adenylosuccinate synthetase family. Homodimer. Mg(2+) is required as a cofactor.

The protein localises to the cytoplasm. It carries out the reaction IMP + L-aspartate + GTP = N(6)-(1,2-dicarboxyethyl)-AMP + GDP + phosphate + 2 H(+). Its pathway is purine metabolism; AMP biosynthesis via de novo pathway; AMP from IMP: step 1/2. Functionally, plays an important role in the de novo pathway and in the salvage pathway of purine nucleotide biosynthesis. Catalyzes the first committed step in the biosynthesis of AMP from IMP. This Blastomyces gilchristii (strain SLH14081) (Blastomyces dermatitidis) protein is Adenylosuccinate synthetase.